Consider the following 1366-residue polypeptide: DNA-directed RNA polymerase subunit beta' (1366 aa).

Over residues 1–20 (MTSSKPKKTSRVRKTTKNSK) the composition is skewed to basic residues. Residues 1–34 (MTSSKPKKTSRVRKTTKNSKKNNPLTMPALAKTP) form a disordered region. Zn(2+)-binding residues include Cys248, Cys315, Cys322, and Cys325. The tract at residues 1291 to 1366 (YTVDMPQSPS…LQEEGLLSDE (76 aa)) is disordered. The span at 1295 to 1305 (MPQSPSVSSTA) shows a compositional bias: polar residues. Over residues 1354-1366 (LEGLQEEGLLSDE) the composition is skewed to low complexity.

Belongs to the RNA polymerase beta' chain family. RpoC2 subfamily. In cyanobacteria the RNAP catalytic core is composed of 2 alpha, 1 beta, 1 beta', 1 gamma and 1 omega subunit. When a sigma factor is associated with the core the holoenzyme is formed, which can initiate transcription. Requires Zn(2+) as cofactor.

The enzyme catalyses RNA(n) + a ribonucleoside 5'-triphosphate = RNA(n+1) + diphosphate. Functionally, DNA-dependent RNA polymerase catalyzes the transcription of DNA into RNA using the four ribonucleoside triphosphates as substrates. The sequence is that of DNA-directed RNA polymerase subunit beta' from Prochlorococcus marinus (strain MIT 9301).